A 414-amino-acid polypeptide reads, in one-letter code: uncharacterized protein (414 aa).

This is an uncharacterized protein from Rickettsia conorii (strain ATCC VR-613 / Malish 7).